Here is a 375-residue protein sequence, read N- to C-terminus: Nucleosome assembly protein 1-like 4 (375 aa).

The disordered stretch occupies residues 1–31; the sequence is MADHSFSDGVPSDSVEAAKNASNTEKLTDQV. Position 2 is an N-acetylalanine (Ala2). 3 positions are modified to phosphoserine: Ser5, Ser7, and Ser12. Over residues 20 to 31 the composition is skewed to polar residues; it reads NASNTEKLTDQV. Position 51 is a phosphothreonine (Thr51). Residues Ser53 and Ser54 each carry the phosphoserine modification. A Phosphothreonine modification is found at Thr58. Lys105 is subject to N6-acetyllysine. The disordered stretch occupies residues 116 to 137; that stretch reads PTDAESEWHSENEEEEKLAGDM. Residues 121–137 are compositionally biased toward basic and acidic residues; that stretch reads SEWHSENEEEEKLAGDM. Ser125 carries the phosphoserine modification. Residue Lys146 is modified to N6-acetyllysine. The Nuclear localization signal signature appears at 265–271; that stretch reads IKKKQKH. Ser304 carries the post-translational modification Phosphoserine. Positions 339 to 375 are disordered; sequence AIEDDDNFEEGEEGEEEELEGDEEGEDEDDAEINPKV.

This sequence belongs to the nucleosome assembly protein (NAP) family. Interacts with core (H2A, CD2APH2B, H3, H4) and linker (H1) histones. As to quaternary structure, (Microbial infection) Interacts with Chikungunya virus non-structural protein 3 (via C-terminus). Phosphorylated at the G0/G1 boundary but it is not phosphorylated in S-phase. Phosphorylated protein remains in the cytoplasm in a complex with histones during the G0/G1 transition, whereas dephosphorylation triggers its transport into the nucleus at the G1/S-boundary. In terms of processing, polyglutamylated by TTLL4, a modification that occurs exclusively on glutamate residues and results in polyglutamate chains on the gamma-carboxyl group. Some residues may also be monoglycylated but not polyglycylated due to the absence of functional TTLL10 in human. In terms of tissue distribution, ubiquitous. Biallelically expressed in fetal and adult tissues. Highest levels in testis.

The protein localises to the nucleus. It localises to the cytoplasm. In terms of biological role, acts as a histone chaperone in nucleosome assembly. This is Nucleosome assembly protein 1-like 4 from Homo sapiens (Human).